Consider the following 279-residue polypeptide: Large ribosomal subunit protein uL2 (279 aa).

Disordered regions lie at residues 1-59 (MGIR…GGHK) and 224-279 (VAMN…KNKR). A compositionally biased stretch (basic residues) spans 50–59 (TTRHKGGGHK). The span at 253–268 (REGRTRRPNKESDKLI) shows a compositional bias: basic and acidic residues. Basic residues predominate over residues 269–279 (VRRRRTGKNKR).

This sequence belongs to the universal ribosomal protein uL2 family. In terms of assembly, part of the 50S ribosomal subunit. Forms a bridge to the 30S subunit in the 70S ribosome.

Its function is as follows. One of the primary rRNA binding proteins. Required for association of the 30S and 50S subunits to form the 70S ribosome, for tRNA binding and peptide bond formation. It has been suggested to have peptidyltransferase activity; this is somewhat controversial. Makes several contacts with the 16S rRNA in the 70S ribosome. The protein is Large ribosomal subunit protein uL2 of Pseudarthrobacter chlorophenolicus (strain ATCC 700700 / DSM 12829 / CIP 107037 / JCM 12360 / KCTC 9906 / NCIMB 13794 / A6) (Arthrobacter chlorophenolicus).